The primary structure comprises 221 residues: MSKQSLELKATSFTLSVLHIKNHDLIALAAELDQKLSQAPQFFIGAPLVINLKAVEKHCLDLSALKTLLMDRQLIIVGITEASPELIEQARALGLAVIKSGKQATTAPLPQRETKVVKQNVRSGQQIYAKNADLVIFGAVGNGAEVIADGSIHIYGALRGKAMAGAAGDHNSVIIANSLEAELVSISGQYWLAEHLQQHSLDKRACIRRDGESLMVETLPQ.

The protein belongs to the MinC family. Interacts with MinD and FtsZ.

Functionally, cell division inhibitor that blocks the formation of polar Z ring septums. Rapidly oscillates between the poles of the cell to destabilize FtsZ filaments that have formed before they mature into polar Z rings. Prevents FtsZ polymerization. The sequence is that of Probable septum site-determining protein MinC from Shewanella denitrificans (strain OS217 / ATCC BAA-1090 / DSM 15013).